The following is a 317-amino-acid chain: Ferrochelatase (317 aa).

The Fe cation site is built by H192 and E271.

The protein belongs to the ferrochelatase family.

The protein resides in the cytoplasm. The catalysed reaction is heme b + 2 H(+) = protoporphyrin IX + Fe(2+). Its pathway is porphyrin-containing compound metabolism; protoheme biosynthesis; protoheme from protoporphyrin-IX: step 1/1. Its function is as follows. Catalyzes the ferrous insertion into protoporphyrin IX. In Geobacter sp. (strain M21), this protein is Ferrochelatase.